The chain runs to 192 residues: Interleukin-18 (192 aa).

A propeptide spanning residues 1-35 (MAAEPEDNCISFVEMKFINNTLYFVAENDEDLESD) is cleaved from the precursor.

This sequence belongs to the IL-1 family. As to quaternary structure, forms a ternary complex with ligand-binding receptor subunit IL18R1 and signaling receptor subunit IL18RAP at the plasma membrane. Mature IL18 first binds to IL18R1 forming a low affinity binary complex, which then interacts with IL18RAP to form a high affinity ternary complex that signals inside the cell. Interacts with cargo receptor TMED10; the interaction mediates the translocation from the cytoplasm into the ERGIC (endoplasmic reticulum-Golgi intermediate compartment) and thereby secretion. Post-translationally, the pro-IL-18 precursor is processed by CASP1, CASP4 or CASP5 to yield its mature, active form. The pro-IL-18 precursor features autoinhibitory interactions between the propeptide and the post-cleavage-site region, preventing recognition by the IL18R1 receptor. Processing by CASP1, CASP4 or CASP5 induces conformational changes to generate critical receptor-binding sites. The mature form is then secreted and released in the extracellular milieu by passing through the gasdermin-D (GSDMD) pore. In contrast, cleavage by CASP3 inactivates IL18.

It is found in the cytoplasm. Its subcellular location is the cytosol. It localises to the secreted. Its function is as follows. Pro-inflammatory cytokine primarily involved in epithelial barrier repair, polarized T-helper 1 (Th1) cell and natural killer (NK) cell immune responses. Upon binding to IL18R1 and IL18RAP, forms a signaling ternary complex which activates NF-kappa-B, triggering synthesis of inflammatory mediators. Synergizes with IL12/interleukin-12 to induce IFNG synthesis from T-helper 1 (Th1) cells and natural killer (NK) cells. Involved in transduction of inflammation downstream of pyroptosis: its mature form is specifically released in the extracellular milieu by passing through the gasdermin-D (GSDMD) pore. The sequence is that of Interleukin-18 (IL18) from Sus scrofa (Pig).